The sequence spans 524 residues: GMP synthase [glutamine-hydrolyzing] (524 aa).

Positions 9–207 (RILILDFGSQ…VIHICQCIPN (199 aa)) constitute a Glutamine amidotransferase type-1 domain. Residue cysteine 86 is the Nucleophile of the active site. Residues histidine 181 and glutamate 183 contribute to the active site. The 192-residue stretch at 208–399 (WTTKHIIEDS…LGLPADLIYR (192 aa)) folds into the GMPS ATP-PPase domain. 235-241 (SGGVDSA) lines the ATP pocket.

As to quaternary structure, homodimer.

The enzyme catalyses XMP + L-glutamine + ATP + H2O = GMP + L-glutamate + AMP + diphosphate + 2 H(+). It functions in the pathway purine metabolism; GMP biosynthesis; GMP from XMP (L-Gln route): step 1/1. Its function is as follows. Catalyzes the synthesis of GMP from XMP. The protein is GMP synthase [glutamine-hydrolyzing] of Coxiella burnetii (strain CbuK_Q154) (Coxiella burnetii (strain Q154)).